A 213-amino-acid polypeptide reads, in one-letter code: Glycerol-3-phosphate acyltransferase (213 aa).

Helical transmembrane passes span 2–22 (ITIV…GLWI), 52–74 (AGMA…PIIF), 81–100 (PLIF…FAGF), 112–132 (VIFG…FGAL), 143–163 (VTAS…GFIL), and 164–184 (SNYD…IIIR).

It belongs to the PlsY family. Probably interacts with PlsX.

Its subcellular location is the cell membrane. It carries out the reaction an acyl phosphate + sn-glycerol 3-phosphate = a 1-acyl-sn-glycero-3-phosphate + phosphate. It participates in lipid metabolism; phospholipid metabolism. In terms of biological role, catalyzes the transfer of an acyl group from acyl-phosphate (acyl-PO(4)) to glycerol-3-phosphate (G3P) to form lysophosphatidic acid (LPA). This enzyme utilizes acyl-phosphate as fatty acyl donor, but not acyl-CoA or acyl-ACP. In Streptococcus pneumoniae (strain Hungary19A-6), this protein is Glycerol-3-phosphate acyltransferase.